Here is a 250-residue protein sequence, read N- to C-terminus: 2,3-bisphosphoglycerate-dependent phosphoglycerate mutase (250 aa).

Residues 10-17 (RHGESQWN), 23-24 (TG), Arg62, 89-92 (ERHY), Lys100, 116-117 (RR), and 185-186 (GN) each bind substrate. Residue His11 is the Tele-phosphohistidine intermediate of the active site. Catalysis depends on Glu89, which acts as the Proton donor/acceptor.

This sequence belongs to the phosphoglycerate mutase family. BPG-dependent PGAM subfamily. In terms of assembly, homodimer.

It catalyses the reaction (2R)-2-phosphoglycerate = (2R)-3-phosphoglycerate. Its pathway is carbohydrate degradation; glycolysis; pyruvate from D-glyceraldehyde 3-phosphate: step 3/5. Its function is as follows. Catalyzes the interconversion of 2-phosphoglycerate and 3-phosphoglycerate. The sequence is that of 2,3-bisphosphoglycerate-dependent phosphoglycerate mutase from Pectobacterium carotovorum subsp. carotovorum (strain PC1).